A 248-amino-acid chain; its full sequence is Probable transcriptional regulatory protein FTF0655 (248 aa).

This sequence belongs to the TACO1 family.

It is found in the cytoplasm. This chain is Probable transcriptional regulatory protein FTF0655, found in Francisella tularensis subsp. tularensis (strain FSC 198).